The sequence spans 33 residues: Neutrophil defensin 3 (33 aa).

Disulfide bonds link C3-C31, C5-C20, and C10-C30.

This sequence belongs to the alpha-defensin family.

It localises to the secreted. Anti-fungal and bactericidal activity, greater against Gram-positive bacteria. This chain is Neutrophil defensin 3, found in Mesocricetus auratus (Golden hamster).